Consider the following 204-residue polypeptide: Thiamine-phosphate synthase (204 aa).

4-amino-2-methyl-5-(diphosphooxymethyl)pyrimidine-binding positions include 35 to 39 (QVREK) and Asn-67. Asp-68 and Asp-87 together coordinate Mg(2+). Ser-106 is a binding site for 4-amino-2-methyl-5-(diphosphooxymethyl)pyrimidine. 2-[(2R,5Z)-2-carboxy-4-methylthiazol-5(2H)-ylidene]ethyl phosphate is bound at residue 132–134 (TPT). Position 135 (Lys-135) interacts with 4-amino-2-methyl-5-(diphosphooxymethyl)pyrimidine. Residues Gly-163 and 183 to 184 (VS) each bind 2-[(2R,5Z)-2-carboxy-4-methylthiazol-5(2H)-ylidene]ethyl phosphate.

The protein belongs to the thiamine-phosphate synthase family. Mg(2+) serves as cofactor.

The enzyme catalyses 2-[(2R,5Z)-2-carboxy-4-methylthiazol-5(2H)-ylidene]ethyl phosphate + 4-amino-2-methyl-5-(diphosphooxymethyl)pyrimidine + 2 H(+) = thiamine phosphate + CO2 + diphosphate. It carries out the reaction 2-(2-carboxy-4-methylthiazol-5-yl)ethyl phosphate + 4-amino-2-methyl-5-(diphosphooxymethyl)pyrimidine + 2 H(+) = thiamine phosphate + CO2 + diphosphate. It catalyses the reaction 4-methyl-5-(2-phosphooxyethyl)-thiazole + 4-amino-2-methyl-5-(diphosphooxymethyl)pyrimidine + H(+) = thiamine phosphate + diphosphate. It functions in the pathway cofactor biosynthesis; thiamine diphosphate biosynthesis; thiamine phosphate from 4-amino-2-methyl-5-diphosphomethylpyrimidine and 4-methyl-5-(2-phosphoethyl)-thiazole: step 1/1. Its function is as follows. Condenses 4-methyl-5-(beta-hydroxyethyl)thiazole monophosphate (THZ-P) and 2-methyl-4-amino-5-hydroxymethyl pyrimidine pyrophosphate (HMP-PP) to form thiamine monophosphate (TMP). The sequence is that of Thiamine-phosphate synthase from Vibrio campbellii (strain ATCC BAA-1116).